A 1772-amino-acid polypeptide reads, in one-letter code: Putative stereocilin-like protein (1772 aa).

Residues 1-25 form the signal peptide; sequence MALSLWPLLLLLLLLLLLSFAVTLA. Asn-65, Asn-427, Asn-476, and Asn-565 each carry an N-linked (GlcNAc...) asparagine glycan.

Belongs to the stereocilin family.

The protein resides in the secreted. This Homo sapiens (Human) protein is Putative stereocilin-like protein (STRCP1).